A 97-amino-acid polypeptide reads, in one-letter code: Co-chaperonin GroES (97 aa).

Belongs to the GroES chaperonin family. In terms of assembly, heptamer of 7 subunits arranged in a ring. Interacts with the chaperonin GroEL.

The protein localises to the cytoplasm. Functionally, together with the chaperonin GroEL, plays an essential role in assisting protein folding. The GroEL-GroES system forms a nano-cage that allows encapsulation of the non-native substrate proteins and provides a physical environment optimized to promote and accelerate protein folding. GroES binds to the apical surface of the GroEL ring, thereby capping the opening of the GroEL channel. The chain is Co-chaperonin GroES from Proteus mirabilis (strain HI4320).